Here is a 484-residue protein sequence, read N- to C-terminus: Cobyric acid synthase (484 aa).

The GATase cobBQ-type domain occupies 248 to 435 (VLKVIVPVLP…LHGLFEGSQS (188 aa)). Catalysis depends on Cys-329, which acts as the Nucleophile. The active site involves His-427.

This sequence belongs to the CobB/CobQ family. CobQ subfamily.

It functions in the pathway cofactor biosynthesis; adenosylcobalamin biosynthesis. Functionally, catalyzes amidations at positions B, D, E, and G on adenosylcobyrinic A,C-diamide. NH(2) groups are provided by glutamine, and one molecule of ATP is hydrogenolyzed for each amidation. This Pseudomonas putida (strain W619) protein is Cobyric acid synthase.